The following is a 372-amino-acid chain: uncharacterized protein (372 aa).

Residues 328 to 353 (KKGQPCKDEDAVTVPLPSSDPGKETQ) form a disordered region.

In terms of biological role, induces the SOS system when expressed in E.coli, therefore, it may play a role in DNA metabolism and/or in genome stability. This is an uncharacterized protein from Saccharomyces cerevisiae (strain ATCC 204508 / S288c) (Baker's yeast).